The chain runs to 168 residues: MRIYLIGFMCSGKSTVGSLLSRSLNIPFYDVDEEVQKREGLSIPQIFEKKGEAYFRKLEFEVLKDLSEKENVVISTGGGLGANEEALNFMKSRGTTVFIDIPFEVFLERCKDSKERPLLKRPLDEIKNLFEERRKIYSKADIKVKGEKPPEEVVKEILLSLEGNALGG.

Residue 10 to 15 participates in ATP binding; the sequence is CSGKST. Residue S14 participates in Mg(2+) binding. The substrate site is built by D32, R56, and G78. R116 contributes to the ATP binding site. R133 contacts substrate.

This sequence belongs to the shikimate kinase family. In terms of assembly, monomer. The cofactor is Mg(2+).

Its subcellular location is the cytoplasm. The catalysed reaction is shikimate + ATP = 3-phosphoshikimate + ADP + H(+). The protein operates within metabolic intermediate biosynthesis; chorismate biosynthesis; chorismate from D-erythrose 4-phosphate and phosphoenolpyruvate: step 5/7. Functionally, catalyzes the specific phosphorylation of the 3-hydroxyl group of shikimic acid using ATP as a cosubstrate. The protein is Shikimate kinase of Aquifex aeolicus (strain VF5).